Here is a 126-residue protein sequence, read N- to C-terminus: Hydrogenase maturation factor HypA (126 aa).

H2 lines the Ni(2+) pocket. 4 residues coordinate Zn(2+): C78, C81, C97, and C100.

The protein belongs to the HypA/HybF family.

Involved in the maturation of [NiFe] hydrogenases. Required for nickel insertion into the metal center of the hydrogenase. The protein is Hydrogenase maturation factor HypA of Methanococcus maripaludis (strain C5 / ATCC BAA-1333).